The sequence spans 98 residues: Feather keratin (98 aa).

N-acetylalanine is present on A1.

It belongs to the avian keratin family. As to quaternary structure, the avian keratins (F-ker, S-ker, C-ker and B-ker) are a complex mixture of very similar polypeptides.

In Chroicocephalus novaehollandiae (Silver gull), this protein is Feather keratin.